We begin with the raw amino-acid sequence, 621 residues long: tRNA uridine 5-carboxymethylaminomethyl modification enzyme MnmG (621 aa).

9–14 is a binding site for FAD; that stretch reads GGGHAG. An NAD(+)-binding site is contributed by 270 to 284; the sequence is GPRYCPSIEDKIVKF.

It belongs to the MnmG family. In terms of assembly, homodimer. Heterotetramer of two MnmE and two MnmG subunits. It depends on FAD as a cofactor.

It localises to the cytoplasm. Functionally, NAD-binding protein involved in the addition of a carboxymethylaminomethyl (cmnm) group at the wobble position (U34) of certain tRNAs, forming tRNA-cmnm(5)s(2)U34. In Borrelia garinii subsp. bavariensis (strain ATCC BAA-2496 / DSM 23469 / PBi) (Borreliella bavariensis), this protein is tRNA uridine 5-carboxymethylaminomethyl modification enzyme MnmG.